The chain runs to 223 residues: Endonuclease NucS (223 aa).

It belongs to the NucS endonuclease family.

It localises to the cytoplasm. Its function is as follows. Cleaves both 3' and 5' ssDNA extremities of branched DNA structures. The polypeptide is Endonuclease NucS (Streptomyces avermitilis (strain ATCC 31267 / DSM 46492 / JCM 5070 / NBRC 14893 / NCIMB 12804 / NRRL 8165 / MA-4680)).